The following is a 258-amino-acid chain: Redox-sensing transcriptional repressor Rex (258 aa).

The segment at residues 26–65 is a DNA-binding region (H-T-H motif); sequence LYLRALTALSERSVPTVSSEELAAAAGVNSAKLRKDFSYL. 100 to 105 contacts NAD(+); it reads GIGNLG. Positions 219–258 are disordered; sequence AGEEAAADGAAPPVAARKQQRSTGSADQGPDGDVPAVMPA. Residues 225 to 234 are compositionally biased toward low complexity; it reads ADGAAPPVAA.

Belongs to the transcriptional regulatory Rex family. Homodimer.

The protein localises to the cytoplasm. Modulates transcription of respiratory genes in response to changes in cellular NADH/NAD(+) redox state. Binds to the DNA sequence motif 5'-TGTGAACGCGTTCACA-3' in the promoter of the cydABCD operon. May play a general role as a sensor of cellular redox balance. The chain is Redox-sensing transcriptional repressor Rex from Streptomyces coelicolor (strain ATCC BAA-471 / A3(2) / M145).